Consider the following 176-residue polypeptide: ATP synthase subunit delta (176 aa).

Belongs to the ATPase delta chain family. As to quaternary structure, F-type ATPases have 2 components, F(1) - the catalytic core - and F(0) - the membrane proton channel. F(1) has five subunits: alpha(3), beta(3), gamma(1), delta(1), epsilon(1). F(0) has three main subunits: a(1), b(2) and c(10-14). The alpha and beta chains form an alternating ring which encloses part of the gamma chain. F(1) is attached to F(0) by a central stalk formed by the gamma and epsilon chains, while a peripheral stalk is formed by the delta and b chains.

The protein localises to the cell membrane. F(1)F(0) ATP synthase produces ATP from ADP in the presence of a proton or sodium gradient. F-type ATPases consist of two structural domains, F(1) containing the extramembraneous catalytic core and F(0) containing the membrane proton channel, linked together by a central stalk and a peripheral stalk. During catalysis, ATP synthesis in the catalytic domain of F(1) is coupled via a rotary mechanism of the central stalk subunits to proton translocation. In terms of biological role, this protein is part of the stalk that links CF(0) to CF(1). It either transmits conformational changes from CF(0) to CF(1) or is implicated in proton conduction. In Wigglesworthia glossinidia brevipalpis, this protein is ATP synthase subunit delta.